A 387-amino-acid chain; its full sequence is Patatin-08 (387 aa).

The first 23 residues, Met-1–Ala-23, serve as a signal peptide directing secretion. The PNPLA domain maps to Leu-32–Ile-230. Residues Gly-36–Gly-41 carry the GXGXXG motif. The short motif at Gly-75–Gly-79 is the GXSXG element. Ser-77 acts as the Nucleophile in catalysis. Asn-115 carries an N-linked (GlcNAc...) asparagine glycan. Residue Asp-216 is the Proton acceptor of the active site. The DGA/G motif lies at Asp-216–Ala-218. The stretch at Glu-361–Ala-385 forms a coiled coil.

The protein belongs to the patatin family. Tuber.

The protein resides in the vacuole. In terms of biological role, probable lipolytic acyl hydrolase (LAH), an activity which is thought to be involved in the response of tubers to pathogens. This Solanum tuberosum (Potato) protein is Patatin-08.